Here is a 391-residue protein sequence, read N- to C-terminus: 3-ketoacyl-CoA thiolase (391 aa).

C95 serves as the catalytic Acyl-thioester intermediate. Active-site proton acceptor residues include H347 and C377.

Belongs to the thiolase-like superfamily. Thiolase family. In terms of assembly, heterotetramer of two alpha chains (FadB) and two beta chains (FadA).

The protein resides in the cytoplasm. It catalyses the reaction an acyl-CoA + acetyl-CoA = a 3-oxoacyl-CoA + CoA. It participates in lipid metabolism; fatty acid beta-oxidation. In terms of biological role, catalyzes the final step of fatty acid oxidation in which acetyl-CoA is released and the CoA ester of a fatty acid two carbons shorter is formed. The protein is 3-ketoacyl-CoA thiolase of Pseudomonas savastanoi pv. phaseolicola (strain 1448A / Race 6) (Pseudomonas syringae pv. phaseolicola (strain 1448A / Race 6)).